A 213-amino-acid chain; its full sequence is Octanoyltransferase (213 aa).

In terms of domain architecture, BPL/LPL catalytic spans 32–207; sequence ENSHDEIWLV…NILALLNNPP (176 aa). Substrate is bound by residues 71-78, 138-140, and 151-153; these read RGGQVTYH, SLG, and GLA. C169 acts as the Acyl-thioester intermediate in catalysis.

Belongs to the LipB family.

It is found in the cytoplasm. The catalysed reaction is octanoyl-[ACP] + L-lysyl-[protein] = N(6)-octanoyl-L-lysyl-[protein] + holo-[ACP] + H(+). It functions in the pathway protein modification; protein lipoylation via endogenous pathway; protein N(6)-(lipoyl)lysine from octanoyl-[acyl-carrier-protein]: step 1/2. In terms of biological role, catalyzes the transfer of endogenously produced octanoic acid from octanoyl-acyl-carrier-protein onto the lipoyl domains of lipoate-dependent enzymes. Lipoyl-ACP can also act as a substrate although octanoyl-ACP is likely to be the physiological substrate. The chain is Octanoyltransferase from Salmonella paratyphi A (strain ATCC 9150 / SARB42).